Consider the following 250-residue polypeptide: DNA repair protein RecO (250 aa).

The protein belongs to the RecO family.

Functionally, involved in DNA repair and RecF pathway recombination. In Rhodopseudomonas palustris (strain ATCC BAA-98 / CGA009), this protein is DNA repair protein RecO.